Consider the following 570-residue polypeptide: Proline--tRNA ligase (570 aa).

This sequence belongs to the class-II aminoacyl-tRNA synthetase family. ProS type 1 subfamily. In terms of assembly, homodimer.

The protein resides in the cytoplasm. It carries out the reaction tRNA(Pro) + L-proline + ATP = L-prolyl-tRNA(Pro) + AMP + diphosphate. In terms of biological role, catalyzes the attachment of proline to tRNA(Pro) in a two-step reaction: proline is first activated by ATP to form Pro-AMP and then transferred to the acceptor end of tRNA(Pro). As ProRS can inadvertently accommodate and process non-cognate amino acids such as alanine and cysteine, to avoid such errors it has two additional distinct editing activities against alanine. One activity is designated as 'pretransfer' editing and involves the tRNA(Pro)-independent hydrolysis of activated Ala-AMP. The other activity is designated 'posttransfer' editing and involves deacylation of mischarged Ala-tRNA(Pro). The misacylated Cys-tRNA(Pro) is not edited by ProRS. The chain is Proline--tRNA ligase from Geobacter metallireducens (strain ATCC 53774 / DSM 7210 / GS-15).